Here is a 201-residue protein sequence, read N- to C-terminus: MLAFTLRFIKNKRYLATLAGALVIIAGLTSQHAWSGNGLPQINGKALAALAKQHPVVVLFRHAERCDRSDNTCLSDSTGITVNGAQNARALGKAFSADIQNYNLYSSNTVRTIQSATWFSAGRSLTVDKKMMDCGSGIYASINTLLKKSQNKNIVIFTHNHCLTYIAKNKRGVKFDPDYLNALVMHAENGKLFLDGEFVPG.

Positions Met-1–Ser-35 are cleaved as a signal peptide.

This sequence belongs to the phosphoglycerate mutase family. Ais subfamily.

The protein localises to the periplasm. It participates in bacterial outer membrane biogenesis; lipopolysaccharide metabolism. In terms of biological role, catalyzes the dephosphorylation of heptose(II) of the outer membrane lipopolysaccharide core. The protein is Lipopolysaccharide core heptose(II)-phosphate phosphatase of Salmonella newport (strain SL254).